The sequence spans 162 residues: Anaerobic nitrite reductase (162 aa).

Ser2 is modified (N-acetylserine). The Globin domain occupies 9–158 (VFTEEQEALV…LVAAIKFEMK (150 aa)). The Homodimerization motif lies at 42–46 (EIAPS). The heme b site is built by Ser52, Lys66, His70, Arg100, and His105. A Homodimerization motif is present at residues 112-124 (NEHFEVTRFALLE).

This sequence belongs to the plant globin family. In terms of assembly, homodimer with distinct heme coordination in each subunits. It depends on heme b as a cofactor. In terms of tissue distribution, root nodules.

Its subcellular location is the cytoplasm. The protein resides in the nucleus. It catalyses the reaction Fe(III)-heme b-[protein] + nitric oxide + H2O = Fe(II)-heme b-[protein] + nitrite + 2 H(+). Phytoglobin that reduces nitrite to nitric oxide (NO) under anoxic conditions (e.g. during flooding or in waterlogged soil) and upon root nodulation. Required for general plant development and during nodulation, especially for the onset of symbiosis. Monitors nitric oxide (NO) levels during early phase of the nitrogen-fixing symbiosis and buffers oxygen in functioning nodules. May not function as an oxygen storage or transport protein. Has an unusually high affinity for O(2) through a hexacoordinate heme iron because of a very low dissociation constant. This is Anaerobic nitrite reductase from Parasponia andersonii (Sponia andersonii).